The sequence spans 176 residues: CASP-like protein 5A1 (176 aa).

The Cytoplasmic segment spans residues 1 to 35 (MNPSHPAVHPVEAPPTDVHHAPRVRMKDYQGMPGT). Residues 36–56 (LGGLALRLGQFCFAVVAFSIM) traverse the membrane as a helical segment. Over 57–67 (LSTDDFSTVTA) the chain is Extracellular. The helical transmembrane segment at 68–88 (FCYLVAATVLQCLWSLALAVI) threads the bilayer. The Cytoplasmic portion of the chain corresponds to 89-102 (DGYALLVKRSLRNS). A helical membrane pass occupies residues 103–123 (LVVSLFVVGDGVTATLTFAAA). Over 124-152 (CASAGITVLIGNDLRECDQNHCGKYETAT) the chain is Extracellular. Residues 153-173 (AMAFLSWFMVSPSFLLTFWLL) traverse the membrane as a helical segment. Over 174–176 (ASR) the chain is Cytoplasmic.

It belongs to the Casparian strip membrane proteins (CASP) family. In terms of assembly, homodimer and heterodimers.

It is found in the cell membrane. The chain is CASP-like protein 5A1 from Ginkgo biloba (Ginkgo).